We begin with the raw amino-acid sequence, 396 residues long: MSGDKKSRSVIYKKTSRDKAVSVYLGKRDYVDHIESVDPVDGVVFVDPDLLKGKKVYVTLTCAFRYGNEDIDVIGLTFRKDLFFARTQVYPPVEDVKCLTKVQERLMKKLGNNAYPFVMAFPDYLPCSVSLQPALSDVNKACGVDFEVKAFSASNLEDRYHKKNSVRLLIRKIQYAPDQPGPTPRAETSWQFFMSDKPLHLTASLAKEVFYHGETITVAVTVTNSSEKTVKKISTSVEQTANVVLYSSDFYTKTVAFDESDEKVSPKSTYKHTFTLLPLLAYNREKREIALDGKLKHEDTNLASSTLLKEGIDRTVMGILVDYKIKVTLTVSGLLGDMTSSEVSTELPFILMHPKPDSGAKESEQEEDFVFEDFARDQLKDELQPEEKEEEEEDEK.

Belongs to the arrestin family.

Functionally, arrestin is one of the major proteins of the ros (retinal rod outer segments); it binds to photoactivated-phosphorylated rhodopsin, thereby apparently preventing the transducin-mediated activation of phosphodiesterase. The chain is S-arrestin from Aquarana catesbeiana (American bullfrog).